The following is a 323-amino-acid chain: Lipoyl synthase (323 aa).

[4Fe-4S] cluster is bound by residues C61, C66, C72, C87, C91, C94, and S303. The Radical SAM core domain maps to 73–292 (WTKKTATFLV…EQYGLSIGIP (220 aa)).

This sequence belongs to the radical SAM superfamily. Lipoyl synthase family. The cofactor is [4Fe-4S] cluster.

It is found in the cytoplasm. It carries out the reaction [[Fe-S] cluster scaffold protein carrying a second [4Fe-4S](2+) cluster] + N(6)-octanoyl-L-lysyl-[protein] + 2 oxidized [2Fe-2S]-[ferredoxin] + 2 S-adenosyl-L-methionine + 4 H(+) = [[Fe-S] cluster scaffold protein] + N(6)-[(R)-dihydrolipoyl]-L-lysyl-[protein] + 4 Fe(3+) + 2 hydrogen sulfide + 2 5'-deoxyadenosine + 2 L-methionine + 2 reduced [2Fe-2S]-[ferredoxin]. It functions in the pathway protein modification; protein lipoylation via endogenous pathway; protein N(6)-(lipoyl)lysine from octanoyl-[acyl-carrier-protein]: step 2/2. In terms of biological role, catalyzes the radical-mediated insertion of two sulfur atoms into the C-6 and C-8 positions of the octanoyl moiety bound to the lipoyl domains of lipoate-dependent enzymes, thereby converting the octanoylated domains into lipoylated derivatives. In Protochlamydia amoebophila (strain UWE25), this protein is Lipoyl synthase.